We begin with the raw amino-acid sequence, 561 residues long: Serine palmitoyltransferase 2 (561 aa).

A helical transmembrane segment spans residues 57–77; it reads PYYISLLTYLNYLILIILGHV. At Lys-366 the chain carries N6-(pyridoxal phosphate)lysine. The helical transmembrane segment at 443-463 threads the bilayer; that stretch reads LGFIVYGVADSPVIPLLLYCP.

It belongs to the class-II pyridoxal-phosphate-dependent aminotransferase family. In terms of assembly, LCB1 and LCB2 encode essential subunits of the enzyme and form a heterodimer. Component of the SPOTS complex, at least composed of LCB1/2 (LCB1 and/or LCB2), ORM1/2 (ORM1 and/or ORM2), SAC1 and TSC3. Interacts with LCB1 and TSC3. Requires pyridoxal 5'-phosphate as cofactor.

It is found in the cytoplasm. It localises to the endoplasmic reticulum. The protein resides in the membrane. The enzyme catalyses L-serine + hexadecanoyl-CoA + H(+) = 3-oxosphinganine + CO2 + CoA. Its pathway is lipid metabolism; sphingolipid metabolism. Catalytic subunit of serine palmitoyltransferase (SPT), which catalyzes the committed step in the synthesis of sphingolipids, the condensation of serine with palmitoyl CoA to form the long chain base 3-ketosphinganine. This chain is Serine palmitoyltransferase 2 (LCB2), found in Saccharomyces cerevisiae (strain ATCC 204508 / S288c) (Baker's yeast).